A 122-amino-acid polypeptide reads, in one-letter code: Large ribosomal subunit protein uL14c (122 aa).

This sequence belongs to the universal ribosomal protein uL14 family. As to quaternary structure, part of the 50S ribosomal subunit.

The protein resides in the plastid. Its subcellular location is the chloroplast. Functionally, binds to 23S rRNA. This is Large ribosomal subunit protein uL14c from Platanus occidentalis (Sycamore).